Here is a 121-residue protein sequence, read N- to C-terminus: Small ribosomal subunit protein uS13 (121 aa).

A disordered region spans residues 90 to 121 (RHRRGLPTRGQNTKNNARTRKGPTKTVAGKKK). Basic residues predominate over residues 106-121 (ARTRKGPTKTVAGKKK).

The protein belongs to the universal ribosomal protein uS13 family. As to quaternary structure, part of the 30S ribosomal subunit. Forms a loose heterodimer with protein S19. Forms two bridges to the 50S subunit in the 70S ribosome.

Its function is as follows. Located at the top of the head of the 30S subunit, it contacts several helices of the 16S rRNA. In the 70S ribosome it contacts the 23S rRNA (bridge B1a) and protein L5 of the 50S subunit (bridge B1b), connecting the 2 subunits; these bridges are implicated in subunit movement. Contacts the tRNAs in the A and P-sites. In Enterococcus faecalis (strain ATCC 700802 / V583), this protein is Small ribosomal subunit protein uS13.